A 322-amino-acid polypeptide reads, in one-letter code: tRNA-dihydrouridine synthase B (322 aa).

FMN contacts are provided by residues 16 to 18 (PMA) and Gln-70. Cys-100 (proton donor) is an active-site residue. Residues Lys-139, 200-202 (NGD), and 224-225 (GR) each bind FMN.

The protein belongs to the Dus family. DusB subfamily. It depends on FMN as a cofactor.

It catalyses the reaction a 5,6-dihydrouridine in tRNA + NAD(+) = a uridine in tRNA + NADH + H(+). The catalysed reaction is a 5,6-dihydrouridine in tRNA + NADP(+) = a uridine in tRNA + NADPH + H(+). Functionally, catalyzes the synthesis of 5,6-dihydrouridine (D), a modified base found in the D-loop of most tRNAs, via the reduction of the C5-C6 double bond in target uridines. The chain is tRNA-dihydrouridine synthase B from Vibrio parahaemolyticus serotype O3:K6 (strain RIMD 2210633).